Consider the following 576-residue polypeptide: G protein-coupled receptor kinase 6 (576 aa).

The segment at 1–185 is N-terminal; sequence MELENIVANT…LERQPVTKNT (185 aa). Residues 53–171 form the RGS domain; the sequence is YHSLCERQPI…LDSIYFNRFL (119 aa). Residues 186 to 448 enclose the Protein kinase domain; it reads FRQYRVLGKG…AREVKEHPLF (263 aa). Residues 192-200, K215, and 264-270 contribute to the ATP site; these read LGKGGFGEV and TLMNGGD. The active-site Proton acceptor is the D311. 315 to 318 contacts ATP; sequence ENIL. The AGC-kinase C-terminal domain occupies 449-514; sequence KKLNFKRLGA…GSVSIPWQNE (66 aa). S484 carries the phosphoserine; by autocatalysis modification. The residue at position 485 (T485) is a Phosphothreonine; by autocatalysis. 3 S-palmitoyl cysteine lipidation sites follow: C561, C562, and C565. 2 positions are modified to phosphoserine: S566 and S568.

The protein belongs to the protein kinase superfamily. AGC Ser/Thr protein kinase family. GPRK subfamily. In terms of assembly, interacts with GIT1. In terms of tissue distribution, widely expressed. Detectable in all brain areas examined.

It localises to the membrane. The catalysed reaction is [G-protein-coupled receptor] + ATP = [G-protein-coupled receptor]-phosphate + ADP + H(+). Functionally, specifically phosphorylates the activated forms of G protein-coupled receptors. Such receptor phosphorylation initiates beta-arrestin-mediated receptor desensitization, internalization, and signaling events leading to their desensitization. Seems to be involved in the desensitization of D2-like dopamine receptors in striatum and chemokine receptor CXCR4 which is critical for CXCL12-induced cell chemotaxis. Phosphorylates rhodopsin (RHO) (in vitro) and a non G-protein-coupled receptor: LRP6 during Wnt signaling (in vitro). The sequence is that of G protein-coupled receptor kinase 6 (Grk6) from Rattus norvegicus (Rat).